A 92-amino-acid chain; its full sequence is Small ribosomal subunit protein uS19 (92 aa).

Belongs to the universal ribosomal protein uS19 family.

Protein S19 forms a complex with S13 that binds strongly to the 16S ribosomal RNA. The sequence is that of Small ribosomal subunit protein uS19 from Bacillus pumilus (strain SAFR-032).